Here is a 582-residue protein sequence, read N- to C-terminus: MHPRYSPAPPPQQQQQMGGPLHQQQGGGGGGGGGIRGPSNAQQLPPQIPRSQNYSNGSSSSAAAAPPTSRSAFPGAPLTASAVALKGALPQRPPAMTSPAAAAAGAALAAGAPYRGAASWTPQGYAPAAAAAAAAVAQQAAYRYTAPLPQPAYAAYTPHTATTPATTTYGQRVPTAASPSNTNSSSSSNTGSQSGTLSTSLSNTTNTNTNMGPNGTVQNQNQQGGEQLSKTNLYIRGLQQGTTDKDLVNMCAQYGTIISTKAILDKTTNKCKGYGFVDFEQPAFAECAVKGLQGKGVQAQMAKQQEQDPTNLYIANLPPHFKETDLEAMLSKYGQVVSTRILRDQQMNSKGVGFARMESREKCEQIIQMFNGNTIPGAKDPLLVKFADGGPKKKNLFKTPDPNARAWRDVSAEGIPVAYDPTMQQNGVSVNVGTPIGVPYSRFSAPQVGGYPVAGSQWIPGYMMTQPITQVDDQTSYSPQYMQMAAAPQLGVTSYKPEAVNQVQPRGISMMVSGDTGVPYGTMMPQLATLQIGNSYISPTYPYYAPPPTIIPTMPMTDSEQASTAASPDEAYTQYPHQAAPK.

Residues 1 to 12 (MHPRYSPAPPPQ) are compositionally biased toward pro residues. The interval 1–73 (MHPRYSPAPP…AAPPTSRSAF (73 aa)) is disordered. The residue at position 5 (Tyr-5) is a Phosphotyrosine. Low complexity predominate over residues 13 to 24 (QQQQMGGPLHQQ). The span at 25–36 (QGGGGGGGGGIR) shows a compositional bias: gly residues. A compositionally biased stretch (polar residues) spans 39–57 (SNAQQLPPQIPRSQNYSNG). Positions 58-72 (SSSSAAAAPPTSRSA) are enriched in low complexity. Phosphotyrosine occurs at positions 125 and 142. A disordered region spans residues 164–225 (PATTTYGQRV…TVQNQNQQGG (62 aa)). Positions 178–225 (SPSNTNSSSSSNTGSQSGTLSTSLSNTTNTNTNMGPNGTVQNQNQQGG) are enriched in low complexity. 2 consecutive RRM domains span residues 231–304 (TNLY…MAKQ) and 310–389 (TNLY…FADG). The segment at 555–582 (PMTDSEQASTAASPDEAYTQYPHQAAPK) is disordered.

Has a role in the perception of gravity. This Drosophila yakuba (Fruit fly) protein is Protein alan shepard.